The chain runs to 224 residues: ATP-dependent dethiobiotin synthetase BioD (224 aa).

14-19 lines the ATP pocket; the sequence is GIGKTV. Thr18 is a Mg(2+) binding site. The active site involves Lys39. Residue Ser43 coordinates substrate. ATP contacts are provided by residues Asp56, 117–120, and 177–178; these read EGVG and NE. Residues Asp56 and Glu117 each coordinate Mg(2+).

This sequence belongs to the dethiobiotin synthetase family. In terms of assembly, homodimer. The cofactor is Mg(2+).

Its subcellular location is the cytoplasm. It catalyses the reaction (7R,8S)-7,8-diammoniononanoate + CO2 + ATP = (4R,5S)-dethiobiotin + ADP + phosphate + 3 H(+). It participates in cofactor biosynthesis; biotin biosynthesis; biotin from 7,8-diaminononanoate: step 1/2. Catalyzes a mechanistically unusual reaction, the ATP-dependent insertion of CO2 between the N7 and N8 nitrogen atoms of 7,8-diaminopelargonic acid (DAPA, also called 7,8-diammoniononanoate) to form a ureido ring. This chain is ATP-dependent dethiobiotin synthetase BioD, found in Xanthomonas campestris pv. campestris (strain ATCC 33913 / DSM 3586 / NCPPB 528 / LMG 568 / P 25).